A 195-amino-acid chain; its full sequence is Small ribosomal subunit protein eS7 (195 aa).

Residues T146 and T151 each carry the phosphothreonine modification. Phosphoserine is present on residues S172 and S173.

It belongs to the eukaryotic ribosomal protein eS7 family. In terms of assembly, component of the small ribosomal subunit (SSU). Mature yeast ribosomes consist of a small (40S) and a large (60S) subunit. The 40S small subunit contains 1 molecule of ribosomal RNA (18S rRNA) and at least 33 different proteins. The large 60S subunit contains 3 rRNA molecules (25S, 5.8S and 5S rRNA) and at least 46 different proteins. Interacts with snoRNA U3. uS11 interacts with MPP10. Component of the ribosomal small subunit (SSU) processome composed of at least 40 protein subunits and snoRNA U3.

Its subcellular location is the cytoplasm. It is found in the nucleus. The protein localises to the nucleolus. In terms of biological role, component of the ribosome, a large ribonucleoprotein complex responsible for the synthesis of proteins in the cell. The small ribosomal subunit (SSU) binds messenger RNAs (mRNAs) and translates the encoded message by selecting cognate aminoacyl-transfer RNA (tRNA) molecules. The large subunit (LSU) contains the ribosomal catalytic site termed the peptidyl transferase center (PTC), which catalyzes the formation of peptide bonds, thereby polymerizing the amino acids delivered by tRNAs into a polypeptide chain. The nascent polypeptides leave the ribosome through a tunnel in the LSU and interact with protein factors that function in enzymatic processing, targeting, and the membrane insertion of nascent chains at the exit of the ribosomal tunnel. eS7 is involved in nucleolar processing of pre-18S ribosomal RNA and ribosome assembly. This chain is Small ribosomal subunit protein eS7 (rps7), found in Schizosaccharomyces pombe (strain 972 / ATCC 24843) (Fission yeast).